The sequence spans 426 residues: Serine--tRNA ligase (426 aa).

Thr-233–Glu-235 serves as a coordination point for L-serine. Arg-264 to Glu-266 contributes to the ATP binding site. An L-serine-binding site is contributed by Glu-287. Glu-351–Ser-354 lines the ATP pocket. Residue Ser-387 coordinates L-serine.

This sequence belongs to the class-II aminoacyl-tRNA synthetase family. Type-1 seryl-tRNA synthetase subfamily. Homodimer. The tRNA molecule binds across the dimer.

It is found in the cytoplasm. The enzyme catalyses tRNA(Ser) + L-serine + ATP = L-seryl-tRNA(Ser) + AMP + diphosphate + H(+). It carries out the reaction tRNA(Sec) + L-serine + ATP = L-seryl-tRNA(Sec) + AMP + diphosphate + H(+). It participates in aminoacyl-tRNA biosynthesis; selenocysteinyl-tRNA(Sec) biosynthesis; L-seryl-tRNA(Sec) from L-serine and tRNA(Sec): step 1/1. Functionally, catalyzes the attachment of serine to tRNA(Ser). Is also able to aminoacylate tRNA(Sec) with serine, to form the misacylated tRNA L-seryl-tRNA(Sec), which will be further converted into selenocysteinyl-tRNA(Sec). This chain is Serine--tRNA ligase, found in Clostridium botulinum (strain Hall / ATCC 3502 / NCTC 13319 / Type A).